The primary structure comprises 592 residues: A-type ATP synthase subunit A (592 aa).

ATP is bound at residue 234–241 (GGFGTGKT).

It belongs to the ATPase alpha/beta chains family. In terms of assembly, has multiple subunits with at least A(3), B(3), C, D, E, F, H, I and proteolipid K(x).

The protein localises to the cell membrane. The catalysed reaction is ATP + H2O + 4 H(+)(in) = ADP + phosphate + 5 H(+)(out). In terms of biological role, component of the A-type ATP synthase that produces ATP from ADP in the presence of a proton gradient across the membrane. The A chain is the catalytic subunit. This chain is A-type ATP synthase subunit A, found in Cenarchaeum symbiosum (strain A).